Here is a 168-residue protein sequence, read N- to C-terminus: Peptide deformylase (168 aa).

Residues cysteine 92 and histidine 134 each coordinate Fe cation. The active site involves glutamate 135. Histidine 138 is a binding site for Fe cation.

Belongs to the polypeptide deformylase family. Fe(2+) serves as cofactor.

The enzyme catalyses N-terminal N-formyl-L-methionyl-[peptide] + H2O = N-terminal L-methionyl-[peptide] + formate. Functionally, removes the formyl group from the N-terminal Met of newly synthesized proteins. Requires at least a dipeptide for an efficient rate of reaction. N-terminal L-methionine is a prerequisite for activity but the enzyme has broad specificity at other positions. The sequence is that of Peptide deformylase from Stutzerimonas stutzeri (strain A1501) (Pseudomonas stutzeri).